The following is a 149-amino-acid chain: Large ribosomal subunit protein uL15 (149 aa).

Over residues 1–28 (MVIKIHDLRPAPGSKRDKIRVGRGEGSK) the composition is skewed to basic and acidic residues. Positions 1 to 54 (MVIKIHDLRPAPGSKRDKIRVGRGEGSKGKTAGRGTKGTKARKNVSPRFEGGQM) are disordered.

This sequence belongs to the universal ribosomal protein uL15 family. As to quaternary structure, part of the 50S ribosomal subunit.

Binds to the 23S rRNA. In Saccharopolyspora erythraea (strain ATCC 11635 / DSM 40517 / JCM 4748 / NBRC 13426 / NCIMB 8594 / NRRL 2338), this protein is Large ribosomal subunit protein uL15.